A 1045-amino-acid polypeptide reads, in one-letter code: MDIS1-interacting receptor like kinase 2 (1045 aa).

A signal peptide spans 1 to 43 (MNKTNPERKISLTSFKERMACKEKPRDLQVLLIISIVLSCSFA). Residues 44-709 (VSATVEEANA…SKKSHKDRNL (666 aa)) lie on the Extracellular side of the membrane. 4 N-linked (GlcNAc...) asparagine glycosylation sites follow: Asn-63, Asn-77, Asn-99, and Asn-119. LRR repeat units lie at residues 92-116 (LGSI…PFSS), 117-140 (LPNL…LWGR), 141-165 (FSKL…LGDL), 166-189 (SNLD…IGRL), 191-212 (KVTE…SFGN), 213-237 (LTKL…IGNL), 238-260 (PNLR…SFGN), 262-285 (KNVT…IGNM), 286-309 (TALD…LGNI), 311-333 (TLAV…LGEM), 334-356 (ESMI…SFGK), 357-381 (LTAL…IANS), 383-405 (ELTV…ICRG), 406-429 (GKLE…LRDC), 431-452 (SLIR…AFGV), 453-476 (YPTL…NWEQ), 477-501 (SQKL…IWNM), 502-525 (TQLS…ISNI), 527-549 (RISK…IRLL), 550-573 (TNLE…LNNL), 575-597 (RLYY…LTKL), 598-620 (SQLQ…QFRS), 621-644 (LQNL…SFKD), and 646-670 (LALT…AFRN). N-linked (GlcNAc...) asparagine glycans are attached at residues Asn-179 and Asn-212. Asn-249, Asn-263, and Asn-284 each carry an N-linked (GlcNAc...) asparagine glycan. N-linked (GlcNAc...) asparagine glycosylation occurs at Asn-323. Asn-380, Asn-393, and Asn-410 each carry an N-linked (GlcNAc...) asparagine glycan. 2 N-linked (GlcNAc...) asparagine glycosylation sites follow: Asn-487 and Asn-500. A glycan (N-linked (GlcNAc...) asparagine) is linked at Asn-580. Asn-633 carries an N-linked (GlcNAc...) asparagine glycan. N-linked (GlcNAc...) asparagine glycosylation is present at Asn-687. The helical transmembrane segment at 710-730 (IIYILVPIIGAIIILSVCAGI) threads the bilayer. The Cytoplasmic portion of the chain corresponds to 731-1045 (FICFRKRTKQ…TMLSISTAFS (315 aa)). Phosphothreonine is present on Thr-772. Positions 775–1045 (FDPKYLIGTG…TMLSISTAFS (271 aa)) constitute a Protein kinase domain. Residues 781–789 (IGTGGHGKV) and Lys-802 contribute to the ATP site. 2 positions are modified to phosphotyrosine: Tyr-853 and Tyr-892. Catalysis depends on Asp-905, which acts as the Proton acceptor. Ser-938 bears the Phosphoserine mark. Tyr-946 and Tyr-953 each carry phosphotyrosine.

Belongs to the protein kinase superfamily. Ser/Thr protein kinase family. Interacts with MDIS1 and LURE1.2. Binds to SCOOP12; this interaction triggers the formation of complex between MIK2 and the BAK1/SERK3 and SERK4 coreceptors. As to expression, expressed in pollen tubes. Highly expressed in shoots, roots and leaves.

The protein localises to the cell membrane. It carries out the reaction L-seryl-[protein] + ATP = O-phospho-L-seryl-[protein] + ADP + H(+). It catalyses the reaction L-threonyl-[protein] + ATP = O-phospho-L-threonyl-[protein] + ADP + H(+). In terms of biological role, acts as a receptor of SCOOP peptides from Brassicaceae plants regulating multiple processing including plant growth, development and stress responses. Perception of SCOOP peptides induces the association of MIK2 with the coreceptors BAK1/SERK3 and SERK4 and relays the signaling through the activation of receptor-like cytosolic kinases (RLCKs) BIK1 and PBL1. Also able to detect SCOOP-like proteins (SCOOPL) present in fungal Fusarium spp. and bacterial Comamonadaceae to elicit various immune responses, including growth inhibition, ROS production, calcium Ca(2+) influx, MAPK activation and MYB51 promoter activation in roots, thus being required for resistance to several root pathogens. Involved in the pollen tube perception of the female signal. Required to trigger defense responses toward generalist herbivores such as Spodoptera littoralis, probably via the activation of jasmonate and indole glucosinolate biosynthesis. The polypeptide is MDIS1-interacting receptor like kinase 2 (Arabidopsis thaliana (Mouse-ear cress)).